The sequence spans 78 residues: Short neurotoxin SNTX14 (78 aa).

Residues 1–21 form the signal peptide; the sequence is MKTLLLTFLVVTIVCLDLGYT. 4 cysteine pairs are disulfide-bonded: cysteine 24–cysteine 40, cysteine 33–cysteine 58, cysteine 62–cysteine 70, and cysteine 71–cysteine 76.

This sequence belongs to the three-finger toxin family. Short-chain subfamily. As to expression, expressed by the venom gland.

Its subcellular location is the secreted. Its function is as follows. This three-finger toxin binds and inhibits the nicotinic acetylcholine receptor (nAChR). In Ophiophagus hannah (King cobra), this protein is Short neurotoxin SNTX14.